The sequence spans 816 residues: S-layer protein (816 aa).

The signal sequence occupies residues 1–29 (MAKTNSYKKVIAGTMTAAMVAGVVSPVAA). SLH domains lie at 30–93 (AGKS…DAKP), 94–150 (SFAD…KVNG), and 152–215 (PATK…VAKV). One can recognise a BIG2 domain in the interval 403–480 (FTSKDFKQND…TVKDSKGKEL (78 aa)).

Its subcellular location is the secreted. The protein localises to the cell wall. It is found in the S-layer. In terms of biological role, the S-layer is a paracrystalline mono-layered assembly of proteins which coat the surface of bacteria. The sequence is that of S-layer protein from Bacillus thuringiensis subsp. finitimus.